A 100-amino-acid chain; its full sequence is uncharacterized protein (100 aa).

It belongs to the csb family.

This is an uncharacterized protein from Dictyostelium discoideum (Social amoeba).